The chain runs to 280 residues: Undecaprenyl-diphosphatase (280 aa).

8 helical membrane passes run 3–23 (IILLIQAVIMGIVEGITEFLP), 45–65 (VDLFVVVVQFGAILAVIYDYW), 88–108 (QLGLSLIVATIPVMIVGFTFA), 115–135 (LFDPIVVAIMLIIGGLLIFYV), 150–170 (VGLKTALMIGLFQCLALIPGT), 191–211 (AEFSFFLGIPVIVGAALLDLL), 225–245 (VLGIGTVVSFIVALLCIRLLV), and 255–275 (IFAWLRIITGVLVLIAAWGFG).

It belongs to the UppP family.

It localises to the cell inner membrane. The catalysed reaction is di-trans,octa-cis-undecaprenyl diphosphate + H2O = di-trans,octa-cis-undecaprenyl phosphate + phosphate + H(+). In terms of biological role, catalyzes the dephosphorylation of undecaprenyl diphosphate (UPP). Confers resistance to bacitracin. The sequence is that of Undecaprenyl-diphosphatase from Psychrobacter arcticus (strain DSM 17307 / VKM B-2377 / 273-4).